The chain runs to 241 residues: Exosome complex component RRP41 homolog (241 aa).

Residue Met1 is modified to N-acetylmethionine.

This sequence belongs to the RNase PH family. In terms of assembly, component of the RNA exosome complex. Interacts with RPP4.

It is found in the cytoplasm. It localises to the nucleus. The protein localises to the nucleolus. Non-catalytic component of the RNA exosome complex which has 3'-&gt;5' exoribonuclease activity and participates in a multitude of cellular RNA processing, maturation and degradation events. In vitro, is a processive phosphorolytic exonuclease and requires a single-stranded poly(A) tail on the substrate RNA for its activity. Can complement the growth defect of a yeast mutant lacking RRP41 exonuclease. Required for normal development of female gametophytes. The polypeptide is Exosome complex component RRP41 homolog (Arabidopsis thaliana (Mouse-ear cress)).